A 145-amino-acid chain; its full sequence is Histone H2B (145 aa).

The disordered stretch occupies residues 1–52 (MAPKAAAGKKPAEKKPVEEKKAEEVPAEKKPKAGKKLPKDAGRPDKKKKRAK). N6-acetyllysine is present on residues Lys9, Lys35, and Lys36. Residues 10–44 (KPAEKKPVEEKKAEEVPAEKKPKAGKKLPKDAGRP) are compositionally biased toward basic and acidic residues. Residue Lys141 forms a Glycyl lysine isopeptide (Lys-Gly) (interchain with G-Cter in ubiquitin) linkage.

Belongs to the histone H2B family. The nucleosome is a histone octamer containing two molecules each of H2A, H2B, H3 and H4 assembled in one H3-H4 heterotetramer and two H2A-H2B heterodimers. The octamer wraps approximately 147 bp of DNA. In terms of processing, can be acetylated to form H2BK6ac, H2BK33ac and H2BK34ac. Monoubiquitinated to form H2BK143ub1; may give a specific tag for epigenetic transcriptional activation. As to expression, in anthers, floral buds, pollen, petals and fruits.

The protein resides in the nucleus. Its subcellular location is the chromosome. Its function is as follows. Core component of nucleosome. Nucleosomes wrap and compact DNA into chromatin, limiting DNA accessibility to the cellular machineries which require DNA as a template. Histones thereby play a central role in transcription regulation, DNA repair, DNA replication and chromosomal stability. DNA accessibility is regulated via a complex set of post-translational modifications of histones, also called histone code, and nucleosome remodeling. The polypeptide is Histone H2B (HIS2B) (Capsicum annuum (Capsicum pepper)).